The primary structure comprises 195 residues: MSAEQVLDQGRLIVFSAPSGTGKSTVAKLVMERLGSLEFSVSATTRQMRAGERDGVDYHFLSREEFEKKIAENGFIEHEFFFGNFYGTLLDKTIDAIKAGHNLLFDLDVKGALNLKRIFGDQALLVFLKPPSMEELARRLQARDSESAEALKSRLERAEMELSHAGEFDFVVVNDDLGRTVDAVATRIAEFLPQP.

Residues 10 to 189 enclose the Guanylate kinase-like domain; that stretch reads GRLIVFSAPS…TVDAVATRIA (180 aa). 17–24 is a binding site for ATP; the sequence is APSGTGKS.

It belongs to the guanylate kinase family.

The protein resides in the cytoplasm. It catalyses the reaction GMP + ATP = GDP + ADP. Its function is as follows. Essential for recycling GMP and indirectly, cGMP. This chain is Guanylate kinase, found in Chlorobaculum tepidum (strain ATCC 49652 / DSM 12025 / NBRC 103806 / TLS) (Chlorobium tepidum).